A 145-amino-acid polypeptide reads, in one-letter code: Late embryogenesis abundant protein D-11 (145 aa).

Positions 1–18 (MAHFQNQYSAPEVTQTDA) are enriched in polar residues. Positions 1–136 (MAHFQNQYSA…EAPWSPQPLI (136 aa)) are disordered. Residues 47–57 (GHHHGGHHGLH) show a composition bias toward basic residues. Residues 58–68 (RTGSSSSSSSS) show a composition bias toward low complexity. Over residues 82–96 (KERLKEKIPGNKEHQ) the composition is skewed to basic and acidic residues. Residues 97–107 (SQATSTTTPGQ) are compositionally biased toward polar residues.

The protein belongs to the plant dehydrin family.

Functionally, LEA protein are late embryogenesis abundant in higher plant seed embryos. There are two subsets of LEA proteins (5a, and 5b), the first ones are expressed when the cotyledon weight reach 80 mg and the second set are expressed above 100 mg. The function of those proteins is not known. The chain is Late embryogenesis abundant protein D-11 from Gossypium hirsutum (Upland cotton).